We begin with the raw amino-acid sequence, 94 residues long: Small ribosomal subunit protein bS18 (94 aa).

The protein belongs to the bacterial ribosomal protein bS18 family. In terms of assembly, part of the 30S ribosomal subunit. Forms a tight heterodimer with protein bS6.

Its function is as follows. Binds as a heterodimer with protein bS6 to the central domain of the 16S rRNA, where it helps stabilize the platform of the 30S subunit. The polypeptide is Small ribosomal subunit protein bS18 (Acetivibrio thermocellus (strain ATCC 27405 / DSM 1237 / JCM 9322 / NBRC 103400 / NCIMB 10682 / NRRL B-4536 / VPI 7372) (Clostridium thermocellum)).